The following is a 614-amino-acid chain: Putative ankyrin repeat protein RBE_0997 (614 aa).

ANK repeat units lie at residues 3–32, 36–65, 69–98, 102–131, 135–164, 168–197, 201–231, 239–268, and 272–301; these read KDEELLIEAIENDDLKEVQKLLQEGVDPNI, DDKPCILSAIRNKNLDIVSVLLENGANPNA, DGEPIISAAIRTKRLDIINILLENRADPNL, RKNTILLKAIQSNNLDIVNAFLNKGANLNA, SGYPIFLKAIKSENLEIINALLEKGANPNL, DGSPLLFTAINTKNLDIIDALIKMGANVEA, DGNTVLNVLLERRGNVNIISLLIENSQDKEK, NGETFLHLAAQQGNSKIFDKYLDYYPTVNI, and AGYTPLYWSKLLGHTEISNKLIERAEELKE. The 233-residue stretch at 348–580 folds into the Glutamine amidotransferase type-1 domain; sequence NVEDIDYRKI…VQSAETFMNK (233 aa). Catalysis depends on cysteine 444, which acts as the Nucleophile. Residues histidine 547 and glutamate 549 contribute to the active site.

This is Putative ankyrin repeat protein RBE_0997 from Rickettsia bellii (strain RML369-C).